The primary structure comprises 431 residues: UDP-N-acetylmuramate--L-alanine ligase (431 aa).

Position 108-114 (108-114) interacts with ATP; that stretch reads GAHGKST.

Belongs to the MurCDEF family.

Its subcellular location is the cytoplasm. It catalyses the reaction UDP-N-acetyl-alpha-D-muramate + L-alanine + ATP = UDP-N-acetyl-alpha-D-muramoyl-L-alanine + ADP + phosphate + H(+). It functions in the pathway cell wall biogenesis; peptidoglycan biosynthesis. Its function is as follows. Cell wall formation. This Campylobacter jejuni subsp. jejuni serotype O:23/36 (strain 81-176) protein is UDP-N-acetylmuramate--L-alanine ligase.